Here is a 294-residue protein sequence, read N- to C-terminus: Bifunctional protein FolD (294 aa).

NADP(+) is bound by residues 175-177 and Ile241; that span reads GAS.

Belongs to the tetrahydrofolate dehydrogenase/cyclohydrolase family. Homodimer.

It carries out the reaction (6R)-5,10-methylene-5,6,7,8-tetrahydrofolate + NADP(+) = (6R)-5,10-methenyltetrahydrofolate + NADPH. The catalysed reaction is (6R)-5,10-methenyltetrahydrofolate + H2O = (6R)-10-formyltetrahydrofolate + H(+). It functions in the pathway one-carbon metabolism; tetrahydrofolate interconversion. Its function is as follows. Catalyzes the oxidation of 5,10-methylenetetrahydrofolate to 5,10-methenyltetrahydrofolate and then the hydrolysis of 5,10-methenyltetrahydrofolate to 10-formyltetrahydrofolate. The polypeptide is Bifunctional protein FolD (Hahella chejuensis (strain KCTC 2396)).